The sequence spans 575 residues: FAD-linked oxidoreductase asqF (575 aa).

The first 23 residues, 1 to 23 (MALFRLSAAIVVIFLYIWSPSQR), serve as a signal peptide directing secretion. Asn-45 and Asn-80 each carry an N-linked (GlcNAc...) asparagine glycan. The 189-residue stretch at 118 to 306 (NQGRIPLYAA…VRVTMRTYPD (189 aa)) folds into the FAD-binding PCMH-type domain. His-156 bears the Pros-8alpha-FAD histidine mark. A glycan (N-linked (GlcNAc...) asparagine) is linked at Asn-370.

The protein belongs to the oxygen-dependent FAD-linked oxidoreductase family. Requires FAD as cofactor.

The enzyme catalyses peniprequinolone + A = yaequinolone E + AH2. The protein operates within secondary metabolite biosynthesis. Its pathway is alkaloid biosynthesis. It functions in the pathway mycotoxin biosynthesis. Its function is as follows. FAD-linked oxidoreductase; part of the gene cluster that mediates the biosynthesis of the aspoquinolone mycotoxins. Within the pathway, asqF performs FAD-dependent dehydrogenation of the dimethylallyl quinolone peniprequinolone to yield the conjugated aryl diene yaequinolone E. The first step of the pathway is catalyzed by the nonribosomal peptide synthetase asqK that condenses anthranilic acid and O-methyl-L-tyrosine to produce 4'-methoxycyclopeptin. 4'-methoxycyclopeptin is then converted to 4'-methoxydehydrocyclopeptin by the ketoglutarate-dependent dioxygenase asqJ. AsqJ also converts its first product 4'-methoxydehydrocyclopeptin to 4'-methoxycyclopenin. The following conversion of 4'-methoxycyclopenin into 4'-methoxyviridicatin is catalyzed by the cyclopenase asqI. 4'-methoxyviridicatin is the precursor of quinolone natural products, and is further converted to quinolinone B. The prenyltransferase asqH1 then catalyzes the canonical Friedel-Crafts alkylation of quinolinone B with dimethylallyl cation to yield dimethylallyl quinolone, which is subjected to FAD-dependent dehydrogenation by the FAD-linked oxidoreductase asqF to yield conjugated aryl diene. The delta(3') double bond then serves as the site of the second alkylation with DMAPP catalyzed by the prenyltransferase asqH2 to yield a carbenium ion intermediate, which can be attacked by H(2)O to yield a styrenyl quinolone containing a C3'-hydroxyprenyl chain. The FAD-dependent monooxygenase asqG performs epoxidation of the terminal C7'-C8' olefin. Finally, after dehydratation of the epoxide at C3 by asqC, the quinolone epoxide rearrangement protein asqO catalyzes an enzymatic 3-exo-tet cyclization to yield the cyclopropyl-THF ring system in aspoquinolone. This chain is FAD-linked oxidoreductase asqF, found in Emericella nidulans (strain FGSC A4 / ATCC 38163 / CBS 112.46 / NRRL 194 / M139) (Aspergillus nidulans).